The chain runs to 256 residues: Probable ATP-dependent transporter slr0075 (256 aa).

Positions 6–250 (LSIKNLTASV…EEKGYDFLDE (245 aa)) constitute an ABC transporter domain. 38 to 45 (GRNGSGKS) contacts ATP.

The protein belongs to the ABC transporter superfamily. Ycf16 family.

In Synechocystis sp. (strain ATCC 27184 / PCC 6803 / Kazusa), this protein is Probable ATP-dependent transporter slr0075.